The following is a 251-amino-acid chain: Imidazole glycerol phosphate synthase subunit HisF (251 aa).

Active-site residues include Asp-11 and Asp-130.

The protein belongs to the HisA/HisF family. In terms of assembly, heterodimer of HisH and HisF.

Its subcellular location is the cytoplasm. The catalysed reaction is 5-[(5-phospho-1-deoxy-D-ribulos-1-ylimino)methylamino]-1-(5-phospho-beta-D-ribosyl)imidazole-4-carboxamide + L-glutamine = D-erythro-1-(imidazol-4-yl)glycerol 3-phosphate + 5-amino-1-(5-phospho-beta-D-ribosyl)imidazole-4-carboxamide + L-glutamate + H(+). The protein operates within amino-acid biosynthesis; L-histidine biosynthesis; L-histidine from 5-phospho-alpha-D-ribose 1-diphosphate: step 5/9. Functionally, IGPS catalyzes the conversion of PRFAR and glutamine to IGP, AICAR and glutamate. The HisF subunit catalyzes the cyclization activity that produces IGP and AICAR from PRFAR using the ammonia provided by the HisH subunit. The protein is Imidazole glycerol phosphate synthase subunit HisF of Cytophaga hutchinsonii (strain ATCC 33406 / DSM 1761 / CIP 103989 / NBRC 15051 / NCIMB 9469 / D465).